The primary structure comprises 252 residues: Thiamine thiazole synthase (252 aa).

NAD(+)-binding positions include serine 35, 54 to 55 (EK), glycine 62, valine 126, and 152 to 154 (HVD). Positions 154 and 169 each coordinate Fe cation. Methionine 217 serves as a coordination point for NAD(+). Residue arginine 227 participates in glycine binding.

Belongs to the THI4 family. As to quaternary structure, homooctamer; tetramer of dimers. The cofactor is Fe(2+).

It carries out the reaction hydrogen sulfide + glycine + NAD(+) = ADP-5-ethyl-4-methylthiazole-2-carboxylate + nicotinamide + 3 H2O + H(+). It functions in the pathway cofactor biosynthesis; thiamine diphosphate biosynthesis. Its function is as follows. Involved in the biosynthesis of the thiazole moiety of thiamine. Catalyzes the conversion of NAD and glycine to adenosine diphosphate 5-(2-hydroxyethyl)-4-methylthiazole-2-carboxylate (ADT), an adenylated thiazole intermediate, using free sulfide as a source of sulfur. The sequence is that of Thiamine thiazole synthase from Pyrococcus furiosus (strain ATCC 43587 / DSM 3638 / JCM 8422 / Vc1).